The chain runs to 585 residues: A-type ATP synthase subunit A (585 aa).

Residue 231–238 (GPFGSGKT) participates in ATP binding.

This sequence belongs to the ATPase alpha/beta chains family. As to quaternary structure, has multiple subunits with at least A(3), B(3), C, D, E, F, H, I and proteolipid K(x).

It is found in the cell membrane. The enzyme catalyses ATP + H2O + 4 H(+)(in) = ADP + phosphate + 5 H(+)(out). Functionally, produces ATP from ADP in the presence of a proton gradient across the membrane. The archaeal alpha chain is a catalytic subunit. Its function is as follows. Component of the A-type ATP synthase that produces ATP from ADP in the presence of a proton gradient across the membrane. The A chain is the catalytic subunit. This is A-type ATP synthase subunit A from Thermococcus sp. (strain KI).